The sequence spans 993 residues: UPF0182 protein Sare_4110 (993 aa).

7 helical membrane-spanning segments follow: residues Ile-18–Trp-38, Leu-61–Leu-81, Leu-110–Gln-130, Gly-171–Phe-191, Ala-209–Asp-229, Ile-260–Met-280, and Leu-283–Ile-303. Disordered stretches follow at residues Gln-892–Ala-937 and Glu-974–Gly-993. A compositionally biased stretch (pro residues) spans Ser-900–Val-929. Low complexity predominate over residues Ala-976 to Gly-993.

It belongs to the UPF0182 family.

The protein localises to the cell membrane. The sequence is that of UPF0182 protein Sare_4110 from Salinispora arenicola (strain CNS-205).